Here is a 39-residue protein sequence, read N- to C-terminus: Photosystem II reaction center protein J (39 aa).

A helical transmembrane segment spans residues 7-27; it reads IPLWIVATVAGTGALVVVGLF.

This sequence belongs to the PsbJ family. PSII is composed of 1 copy each of membrane proteins PsbA, PsbB, PsbC, PsbD, PsbE, PsbF, PsbH, PsbI, PsbJ, PsbK, PsbL, PsbM, PsbT, PsbX, PsbY, PsbZ, Psb30/Ycf12, peripheral proteins PsbO, CyanoQ (PsbQ), PsbU, PsbV and a large number of cofactors. It forms dimeric complexes.

Its subcellular location is the cellular thylakoid membrane. Functionally, one of the components of the core complex of photosystem II (PSII). PSII is a light-driven water:plastoquinone oxidoreductase that uses light energy to abstract electrons from H(2)O, generating O(2) and a proton gradient subsequently used for ATP formation. It consists of a core antenna complex that captures photons, and an electron transfer chain that converts photonic excitation into a charge separation. The polypeptide is Photosystem II reaction center protein J (Synechococcus sp. (strain ATCC 27144 / PCC 6301 / SAUG 1402/1) (Anacystis nidulans)).